Consider the following 86-residue polypeptide: Small ribosomal subunit protein uS17 (86 aa).

This sequence belongs to the universal ribosomal protein uS17 family. Part of the 30S ribosomal subunit.

In terms of biological role, one of the primary rRNA binding proteins, it binds specifically to the 5'-end of 16S ribosomal RNA. The polypeptide is Small ribosomal subunit protein uS17 (Roseiflexus sp. (strain RS-1)).